We begin with the raw amino-acid sequence, 242 residues long: Zinc-finger homeodomain protein 13 (242 aa).

The ZF-HD dimerization-type; degenerate zinc finger occupies 64–111 (YYECRKNHAADIGTTAYDGCGEFVSSTGEEDSLNCAACGCHRNFHREE). The segment at 144–166 (GGKSEGKKKKKEKESYGGDPIIK) is disordered. Basic and acidic residues predominate over residues 155–166 (EKESYGGDPIIK). The homeobox DNA-binding region spans 179-238 (VKRLKTKFTAEQTEKMRDYAEKLRWKVRPERQEEVEEFCVEIGVNRKNFRIWMNNHKDKI).

Homo- and heterodimer with other ZFHD proteins. Interacts with MIF1, MIF2 and MIF3; these interactions prevent nuclear localization and DNA-binding to inhibit transcription regulation activity. Binds to ZHD11. As to expression, mostly expressed in flowers.

It localises to the nucleus. Its function is as follows. Putative transcription factor. The protein is Zinc-finger homeodomain protein 13 (ZHD13) of Arabidopsis thaliana (Mouse-ear cress).